The sequence spans 498 residues: Aspartyl/glutamyl-tRNA(Asn/Gln) amidotransferase subunit B (498 aa).

The protein belongs to the GatB/GatE family. GatB subfamily. Heterotrimer of A, B and C subunits.

It catalyses the reaction L-glutamyl-tRNA(Gln) + L-glutamine + ATP + H2O = L-glutaminyl-tRNA(Gln) + L-glutamate + ADP + phosphate + H(+). It carries out the reaction L-aspartyl-tRNA(Asn) + L-glutamine + ATP + H2O = L-asparaginyl-tRNA(Asn) + L-glutamate + ADP + phosphate + 2 H(+). Allows the formation of correctly charged Asn-tRNA(Asn) or Gln-tRNA(Gln) through the transamidation of misacylated Asp-tRNA(Asn) or Glu-tRNA(Gln) in organisms which lack either or both of asparaginyl-tRNA or glutaminyl-tRNA synthetases. The reaction takes place in the presence of glutamine and ATP through an activated phospho-Asp-tRNA(Asn) or phospho-Glu-tRNA(Gln). The polypeptide is Aspartyl/glutamyl-tRNA(Asn/Gln) amidotransferase subunit B (Erythrobacter litoralis (strain HTCC2594)).